The following is a 396-amino-acid chain: Phosphoglycerate kinase (396 aa).

Residues 21 to 23 (DFN), arginine 36, 59 to 62 (HLGK), arginine 119, and arginine 156 contribute to the substrate site. Residues lysine 206, glycine 294, glutamate 325, and 352-355 (GGDS) each bind ATP.

The protein belongs to the phosphoglycerate kinase family. As to quaternary structure, monomer.

Its subcellular location is the cytoplasm. The enzyme catalyses (2R)-3-phosphoglycerate + ATP = (2R)-3-phospho-glyceroyl phosphate + ADP. The protein operates within carbohydrate degradation; glycolysis; pyruvate from D-glyceraldehyde 3-phosphate: step 2/5. This chain is Phosphoglycerate kinase, found in Listeria innocua serovar 6a (strain ATCC BAA-680 / CLIP 11262).